Consider the following 1534-residue polypeptide: DNA polymerase alpha catalytic subunit (1534 aa).

The segment covering 1–12 has biased composition (low complexity); the sequence is MDEGSADAGASG. Disordered stretches follow at residues 1 to 23, 96 to 141, and 864 to 905; these read MDEG…SEAV, THRT…LSAA, and FNST…GPSY. Residues 116-125 are compositionally biased toward basic residues; it reads RKRKQPRPQS. Residues 127 to 141 show a composition bias toward low complexity; it reads RPPQQSAAAASLSAA. 2 stretches are compositionally biased toward basic and acidic residues: residues 864–882 and 889–898; these read FNST…RPDE and DEGHHVDQGK. The Zn(2+) site is built by C1340, C1343, C1383, C1386, C1422, C1427, C1448, and C1454. A CysA-type zinc finger spans residues 1340 to 1386; the sequence is CPSCSTTFDCPPVSSLIIGSSSGNVSNPNEGNDASINFWRRMRCPRC. Positions 1422–1451 match the CysB motif motif; it reads CDDEGCKYSTHSVNLRVMGDSERGTICPNY.

Belongs to the DNA polymerase type-B family.

The protein resides in the nucleus. It catalyses the reaction DNA(n) + a 2'-deoxyribonucleoside 5'-triphosphate = DNA(n+1) + diphosphate. Its function is as follows. Polymerase alpha in a complex with DNA primase is a replicative polymerase. The polypeptide is DNA polymerase alpha catalytic subunit (Oryza sativa subsp. japonica (Rice)).